The sequence spans 257 residues: Acyl-[acyl-carrier-protein]--UDP-N-acetylglucosamine O-acyltransferase (257 aa).

This sequence belongs to the transferase hexapeptide repeat family. LpxA subfamily. Homotrimer.

The protein localises to the cytoplasm. It catalyses the reaction a (3R)-hydroxyacyl-[ACP] + UDP-N-acetyl-alpha-D-glucosamine = a UDP-3-O-[(3R)-3-hydroxyacyl]-N-acetyl-alpha-D-glucosamine + holo-[ACP]. It functions in the pathway glycolipid biosynthesis; lipid IV(A) biosynthesis; lipid IV(A) from (3R)-3-hydroxytetradecanoyl-[acyl-carrier-protein] and UDP-N-acetyl-alpha-D-glucosamine: step 1/6. Functionally, involved in the biosynthesis of lipid A, a phosphorylated glycolipid that anchors the lipopolysaccharide to the outer membrane of the cell. In Anaeromyxobacter dehalogenans (strain 2CP-1 / ATCC BAA-258), this protein is Acyl-[acyl-carrier-protein]--UDP-N-acetylglucosamine O-acyltransferase.